The sequence spans 125 residues: Large ribosomal subunit protein bL19 (125 aa).

This sequence belongs to the bacterial ribosomal protein bL19 family.

This protein is located at the 30S-50S ribosomal subunit interface and may play a role in the structure and function of the aminoacyl-tRNA binding site. This Wolbachia pipientis wMel protein is Large ribosomal subunit protein bL19.